The chain runs to 170 residues: Allophycocyanin subunit beta-18 (170 aa).

An N4-methylasparagine modification is found at Asn74. Cys84 lines the (2R,3E)-phycocyanobilin pocket.

Belongs to the phycobiliprotein family. Heterodimer of an alpha and a beta chain. In terms of processing, contains one covalently linked bilin chromophore.

Its subcellular location is the plastid. It is found in the chloroplast thylakoid membrane. Light-harvesting photosynthetic bile pigment-protein from the phycobiliprotein complex. Allophycocyanin has a maximum absorption at approximately 650 nanometers. This chain is Allophycocyanin subunit beta-18 (apcF), found in Cyanidium caldarium (Red alga).